Reading from the N-terminus, the 2026-residue chain is Fatty acid synthase subunit beta (2026 aa).

The interval 148-526 (ILMAFGGQGS…VDGRGVRIIA (379 aa)) is acetyltransferase (AT) domain. The For acetyltransferase activity role is filled by Ser-268. Residues 579-824 (SQLLQAPPII…LILAAAGVAD (246 aa)) form an enoyl reductase (ER) domain region. Positions 1130–1604 (SQVTGSVRSA…LPGDQLTVRI (475 aa)) are dehydratase (DH) domain. The region spanning 1512–1625 (PGLIDNGSRT…LSVAAYREGT (114 aa)) is the MaoC-like domain. A malonyl/palmitoyl transferase (MT/PT) domain region spans residues 1643–2016 (YLFTGQGSQA…LEEAAAVTGS (374 aa)). Ser-1788 (for malonyltransferase activity) is an active-site residue.

Belongs to the fungal fatty acid synthetase subunit beta family. [Alpha(6)beta(6)] hexamers of two multifunctional subunits (alpha and beta).

The enzyme catalyses acetyl-CoA + n malonyl-CoA + 2n NADPH + 4n H(+) = a long-chain-acyl-CoA + n CoA + n CO2 + 2n NADP(+).. It carries out the reaction holo-[ACP] + acetyl-CoA = acetyl-[ACP] + CoA. It catalyses the reaction holo-[ACP] + malonyl-CoA = malonyl-[ACP] + CoA. The catalysed reaction is a (3R)-hydroxyacyl-[ACP] = a (2E)-enoyl-[ACP] + H2O. The enzyme catalyses a 2,3-saturated acyl-[ACP] + NAD(+) = a (2E)-enoyl-[ACP] + NADH + H(+). It carries out the reaction (9Z)-octadecenoyl-[ACP] + H2O = (9Z)-octadecenoate + holo-[ACP] + H(+). Its pathway is secondary metabolite biosynthesis. Fatty acid synthase beta subunit; part of the gene cluster that mediates the biosynthesis of oryzines, natural products with an unusual maleidride backbone. The two subunits of the fungal fatty acid synthase oryfasA and oryfasB probably form octenoic acid. This fatty acid is most likely activated by the acyl-CoA ligase oryP to give octenyl-CoA before the citrate synthase-like protein oryE catalyzes condensation with oxaloacetate to form tricarboxylic acid. The next steps of the pathways are conjectural, but a favorite possible route has been proposed, beginning with decarboxylation and concomitant dehydration by the decarboxylase oryM, followed by tautomerization, which may lead to the production of a diene intermediate. Reduction of this diene intermediate could give the known metabolite piliformic acid. On the pathway to oryzine B and oryzine A, however, hydroxylation of the diene by the alpha-ketoglutarate-dependent dioxygenase oryG and lactonisation by the lactonohydrolases oryH or oryL could give oryzine B directly. Finally, enoyl reduction by the dehydrogenase oryD would then convert oryzine B into oryzine A. The chain is Fatty acid synthase subunit beta from Aspergillus oryzae (strain ATCC 42149 / RIB 40) (Yellow koji mold).